The following is a 673-amino-acid chain: UvrABC system protein B (673 aa).

In terms of domain architecture, Helicase ATP-binding spans 26 to 183; that stretch reads EGLEDGLAHQ…RRLAELQYAR (158 aa). An ATP-binding site is contributed by 39-46; the sequence is GVTGSGKT. A Beta-hairpin motif is present at residues 92–115; sequence YYDYYQPEAYVPSSDTFIEKDASV. The Helicase C-terminal domain maps to 431 to 597; that stretch reads QVDDLLSEIR…GLNKKVVDIL (167 aa). Residues 608–627 are disordered; it reads AKGRGKSRPIVEPDNVPMDM. Residues 633 to 668 enclose the UVR domain; sequence QQKIHELEGLMMQHAQNLEFEEAAQIRDQLHLLREL.

This sequence belongs to the UvrB family. As to quaternary structure, forms a heterotetramer with UvrA during the search for lesions. Interacts with UvrC in an incision complex.

The protein resides in the cytoplasm. The UvrABC repair system catalyzes the recognition and processing of DNA lesions. A damage recognition complex composed of 2 UvrA and 2 UvrB subunits scans DNA for abnormalities. Upon binding of the UvrA(2)B(2) complex to a putative damaged site, the DNA wraps around one UvrB monomer. DNA wrap is dependent on ATP binding by UvrB and probably causes local melting of the DNA helix, facilitating insertion of UvrB beta-hairpin between the DNA strands. Then UvrB probes one DNA strand for the presence of a lesion. If a lesion is found the UvrA subunits dissociate and the UvrB-DNA preincision complex is formed. This complex is subsequently bound by UvrC and the second UvrB is released. If no lesion is found, the DNA wraps around the other UvrB subunit that will check the other stand for damage. The polypeptide is UvrABC system protein B (Escherichia coli O81 (strain ED1a)).